The sequence spans 487 residues: RCC1 repeat-containing protein DDB_G0284033 (487 aa).

5 RCC1 repeats span residues 66 to 127 (SNKV…FSGY), 207 to 259 (RSLI…ALSN), 260 to 313 (DGKL…ALTS), 373 to 426 (NGNI…IVET), and 428 to 483 (DGRF…SLNS).

The chain is RCC1 repeat-containing protein DDB_G0284033 from Dictyostelium discoideum (Social amoeba).